We begin with the raw amino-acid sequence, 99 residues long: Small ribosomal subunit protein bS20 (99 aa).

This sequence belongs to the bacterial ribosomal protein bS20 family.

Binds directly to 16S ribosomal RNA. The chain is Small ribosomal subunit protein bS20 from Prochlorococcus marinus (strain SARG / CCMP1375 / SS120).